Here is a 178-residue protein sequence, read N- to C-terminus: Large ribosomal subunit protein uL6 (178 aa).

This sequence belongs to the universal ribosomal protein uL6 family. Part of the 50S ribosomal subunit.

Its function is as follows. This protein binds to the 23S rRNA, and is important in its secondary structure. It is located near the subunit interface in the base of the L7/L12 stalk, and near the tRNA binding site of the peptidyltransferase center. The polypeptide is Large ribosomal subunit protein uL6 (Streptococcus gordonii (strain Challis / ATCC 35105 / BCRC 15272 / CH1 / DL1 / V288)).